We begin with the raw amino-acid sequence, 97 residues long: Co-chaperonin GroES (97 aa).

It belongs to the GroES chaperonin family. Heptamer of 7 subunits arranged in a ring. Interacts with the chaperonin GroEL.

It localises to the cytoplasm. Its function is as follows. Together with the chaperonin GroEL, plays an essential role in assisting protein folding. The GroEL-GroES system forms a nano-cage that allows encapsulation of the non-native substrate proteins and provides a physical environment optimized to promote and accelerate protein folding. GroES binds to the apical surface of the GroEL ring, thereby capping the opening of the GroEL channel. The chain is Co-chaperonin GroES from Buchnera aphidicola subsp. Tuberolachnus salignus.